Here is a 464-residue protein sequence, read N- to C-terminus: Putative protein TIC 214 C-terminal part (464 aa).

It belongs to the TIC214 family. Part of the Tic complex.

Its subcellular location is the plastid. It localises to the chloroplast. In terms of biological role, involved in protein precursor import into chloroplasts. May be part of an intermediate translocation complex acting as a protein-conducting channel at the inner envelope. The sequence is that of Putative protein TIC 214 C-terminal part from Marchantia polymorpha (Common liverwort).